We begin with the raw amino-acid sequence, 209 residues long: Uracil phosphoribosyltransferase (209 aa).

Residues Arg-79, Arg-104, and 131-139 (DPMLATGAS) each bind 5-phospho-alpha-D-ribose 1-diphosphate. Residues Ile-194 and 199–201 (GDA) contribute to the uracil site. Asp-200 is a 5-phospho-alpha-D-ribose 1-diphosphate binding site.

Belongs to the UPRTase family. Requires Mg(2+) as cofactor.

It carries out the reaction UMP + diphosphate = 5-phospho-alpha-D-ribose 1-diphosphate + uracil. Its pathway is pyrimidine metabolism; UMP biosynthesis via salvage pathway; UMP from uracil: step 1/1. Its activity is regulated as follows. Allosterically activated by GTP. In terms of biological role, catalyzes the conversion of uracil and 5-phospho-alpha-D-ribose 1-diphosphate (PRPP) to UMP and diphosphate. This chain is Uracil phosphoribosyltransferase, found in Staphylococcus aureus (strain JH1).